The following is a 451-amino-acid chain: UDP-N-acetylmuramate--L-alanine ligase (451 aa).

110–116 (GTHGKTT) is an ATP binding site.

This sequence belongs to the MurCDEF family.

The protein localises to the cytoplasm. The catalysed reaction is UDP-N-acetyl-alpha-D-muramate + L-alanine + ATP = UDP-N-acetyl-alpha-D-muramoyl-L-alanine + ADP + phosphate + H(+). The protein operates within cell wall biogenesis; peptidoglycan biosynthesis. Functionally, cell wall formation. The sequence is that of UDP-N-acetylmuramate--L-alanine ligase from Francisella tularensis subsp. holarctica (strain FTNF002-00 / FTA).